Here is a 327-residue protein sequence, read N- to C-terminus: Polyprenyl transferase esdpC (327 aa).

The next 8 membrane-spanning stretches (helical) occupy residues 35–54 (YNPLLATFSGVWATLLAGAS), 73–93 (LLVFVGGYIFCGAGMVWNDWI), 118–138 (EALIWMMAQYIASWYLIAYTL), 140–160 (GHNVLEAMIPVTISTILYPFG), 171–191 (YPQYFLGFTLGYPSVIGWLAI), 202–222 (IMESFALGTTVFTWVLYLNTA), 239–259 (VYFLAGSYIHYFLVFLAALVL), and 307–327 (ENFALGVWTVFACAVELLLKS).

Belongs to the UbiA prenyltransferase family. Mg(2+) serves as cofactor.

The protein localises to the membrane. Its pathway is secondary metabolite biosynthesis; terpenoid biosynthesis. Olyprenyl transferase; part of the cluster that mediates the biosynthesis of shearones, diterpenoid pyrones (DPs) which are structurally diverse meroterpenoids consisting of a diterpene linked by a pyrone, and which may exhibit a range of bioactivities. Within the pathway, esdpC takes part to the biosynthesis of the molecular scaffold by catalyzing the C-3 geranylgeranylation reaction of the alpha-pyrone produced by esdpA. The molecular scaffold is commonly biosynthesized by a series of enzymes including the non-reducing polyketide synthase (NR-PKS) esdpA that generates an alpha-pyrone; the prenyltransferase esdpC that attaches a geranylgeranyl pyrophosphate (GGPP) produced by the GGPP synthase (GGPPS) esdpD onto the pyrone unit; the FAD-dependent monooxygenase esdpE that converts an olefin on the diterpene unit into an epoxide; and the terpene cyclase esdpB that catalyzes the cyclization reactions to give the molecular backbone shearone A. In the modification steps, esdpF oxidizes the hydroxy group to a ketone at C-3 and esdpG then attaches hydroxy groups at both C-11 and C-12. After that, esdpI hydroxylates at C-20 and esdpH hydroxylates at C-6'. The ether bridge is generated by nucleophilic attack of the hydroxy group at C-20 to the carbonyl carbon at C-3. EsdpH can also functions prior to esdpI. The different combinations of these modification enzymes lead to the production of diverse shearone derivatives, shearone I being the end product of the pathway. The alpha-ketoglutarate-dependent dioxygenase esdpJ seems not to be involved in this pathway. The polypeptide is Polyprenyl transferase esdpC (Penicillium shearii (Eupenicillium shearii)).